Here is a 501-residue protein sequence, read N- to C-terminus: MNGSLDHPDQPDIDSIKMFVGQIPRTWSEDQLRELFEPYGAVYEINVLRDRSQNPPQSKGCCFVTYYTRKSALEAQNALHNMKILPGMHHPIQMKPADSEKNNAVEDRKLFVGMISKKCNENDIRLMFSPYGQIEECRILRGPDGLSRGCAFVTFTARQMAQSAIKSMHQSQTMEGCSSPIVVKFADTQKDKEQKRIAQQLQQQMQQLNAASMWGNLTGLNSLGPQYLALYLQLLQQSASSGNALNNLHPMSGLNAMQNLAALAAAASATQATPTGSSALTTSSSPLSVLTSSGTPSGQPAQSAWDAYKAGSSPTSSTSSSVNPMASLGALQSLAAGAGAGLNMSSLASMAALNGGLGSGGLSNGSGSTMEALTQAAYSGIQQYAAAALPSLYSQSLLSQQNVSAAGSQKEGPEGANLFIYHLPQEFGDQDLLQMFMPFGNVISAKVFIDKQTNLSKCFGFVSYDNPVSSQAAIQSMNGFQIGMKRLKVQLKRSKNDSKPY.

The interval 2–196 (NGSLDHPDQP…DTQKDKEQKR (195 aa)) is binds strongly to URE. RRM domains lie at 16–99 (IKMF…PADS) and 108–188 (RKLF…FADT). Low complexity-rich tracts occupy residues 274 to 298 (PTGS…TPSG) and 312 to 323 (SSPTSSTSSSVN). Residues 274–323 (PTGSSALTTSSSPLSVLTSSGTPSGQPAQSAWDAYKAGSSPTSSTSSSVN) form a disordered region. The binds strongly to URE stretch occupies residues 397–501 (LLSQQNVSAA…KRSKNDSKPY (105 aa)). The RRM 3 domain maps to 416 to 494 (ANLFIYHLPQ…KRLKVQLKRS (79 aa)).

It belongs to the CELF/BRUNOL family.

It localises to the nucleus. Its subcellular location is the cytoplasm. RNA-binding protein implicated in the regulation of several post-transcriptional events. May be involved in mRNA translation activation and stability. Involved in the regulation of muscle-specific splicing of alpha actinin pre-mRNAs via the binding to the UR-repeat element (URE) at the branch point of the non-muscle (NM) exon. This chain is CUGBP Elav-like family member 1 (celf1), found in Danio rerio (Zebrafish).